The following is a 517-amino-acid chain: Type II methyltransferase M.CeqI (517 aa).

Disordered stretches follow at residues 1-21 and 33-62; these read MVVT…RWPR and GRPR…HGRS. Residues 51 to 62 show a composition bias toward basic residues; the sequence is RPRRGRAPHGRS. TPR repeat units lie at residues 283 to 316, 361 to 394, and 476 to 509; these read AEFY…FENN, ALLL…GDHS, and SELA…RTNM.

The enzyme catalyses a 2'-deoxyadenosine in DNA + S-adenosyl-L-methionine = an N(6)-methyl-2'-deoxyadenosine in DNA + S-adenosyl-L-homocysteine + H(+). Functionally, a methylase, recognizes the double-stranded sequence 5'-GATATC-3', methylates A-? on both strands, and protects the DNA from cleavage by the CeqI endonuclease. The chain is Type II methyltransferase M.CeqI (ceqIM) from Rhodococcus hoagii (Corynebacterium equii).